We begin with the raw amino-acid sequence, 304 residues long: Small glutamine-rich tetratricopeptide repeat-containing protein beta (304 aa).

4 TPR repeats span residues 15-49 (LREQSQMDAYTSDEQESLEVAIQCLETVFKISPED), 85-118 (ADQLKDEGNNHMKEENYAAAVDCYTQAIELDPNN), 120-152 (VYYCNRAAAQSKLSHYTDAIKDCEKAIAIDSKY), and 153-186 (SKAYGRMGLALTAMNKFEEAVTSYQKALDLDPEN). Lys-131 carries the N6-acetyllysine modification. A phosphoserine mark is found at Ser-293, Ser-295, and Ser-297.

This sequence belongs to the SGT family. In terms of assembly, homooligomerize. Expressed specifically in brain.

Co-chaperone that binds directly to HSC70 and HSP70 and regulates their ATPase activity. This is Small glutamine-rich tetratricopeptide repeat-containing protein beta (Sgtb) from Rattus norvegicus (Rat).